The sequence spans 1083 residues: Alpha-mannosidase (1083 aa).

An N-acetylserine modification is found at Ser2. Zn(2+) contacts are provided by His298, Asp300, Asp411, and His626. Asp411 (nucleophile) is an active-site residue.

The protein belongs to the glycosyl hydrolase 38 family. In terms of assembly, composed of isoforms with three constituent polypeptides described as [(107 kDa)-n (73 kDa)-(6-n) (31 kDa)-(6-n)], where n is 0-6. The 73 kDa and the 31 kDa polypeptides may be proteolytic derivatives of the 107 kDa polypeptide in the vacuole. Oligomerizes in the cytoplasm and retains its oligomeric form during import into the vacuole. Zn(2+) is required as a cofactor. Post-translationally, the N-terminus is blocked.

It is found in the vacuole. It catalyses the reaction Hydrolysis of terminal, non-reducing alpha-D-mannose residues in alpha-D-mannosides.. Degrades free oligosaccharides in the vacuole. The chain is Alpha-mannosidase (AMS1) from Saccharomyces cerevisiae (strain ATCC 204508 / S288c) (Baker's yeast).